We begin with the raw amino-acid sequence, 345 residues long: MKVAIIGATGYGGIELIRLLEQHPYFSIASLHSFSQVGECITNVYPHFQNVLVHTLQEIDVEEIEKEAEIVFLATPAGVSAELTPKLLAVGLKVIDLSGDFRMKDPFIYEKWYKRVAAKEGVLREAVYGLSEWKRYEIQKANLIANPGCFATAALLAVLPLVRSGIIEEDSIIIDAKSGVSGAGKTPTTMTHFPELYDNLRIYKVNEHQHVPEIEQMLTEWNRETKPITFSTHLIPISRGIMVTLYAKVKREMEIEQLQQLYEKAYEQSAFVRIRMQGEFPSPKEVRGSNYCDMGIAYDERTGRVTVVSVIDNMMKGAAGQAIQNANIVAGLEETTGLQHMPLYL.

The active site involves Cys-149.

This sequence belongs to the NAGSA dehydrogenase family. Type 1 subfamily.

The protein resides in the cytoplasm. It carries out the reaction N-acetyl-L-glutamate 5-semialdehyde + phosphate + NADP(+) = N-acetyl-L-glutamyl 5-phosphate + NADPH + H(+). Its pathway is amino-acid biosynthesis; L-arginine biosynthesis; N(2)-acetyl-L-ornithine from L-glutamate: step 3/4. Functionally, catalyzes the NADPH-dependent reduction of N-acetyl-5-glutamyl phosphate to yield N-acetyl-L-glutamate 5-semialdehyde. The chain is N-acetyl-gamma-glutamyl-phosphate reductase from Bacillus thuringiensis subsp. konkukian (strain 97-27).